We begin with the raw amino-acid sequence, 419 residues long: Vacuolar aspartic protease (419 aa).

The N-terminal stretch at 1 to 22 (MQLSLSALTTVALALTSSLVDA) is a signal peptide. In terms of domain architecture, Peptidase A1 spans 104–415 (YFTEIQIGTP…DLDKNAVGLA (312 aa)). Residue D122 is part of the active site. Cysteines 135 and 140 form a disulfide. N-linked (GlcNAc...) asparagine glycosylation occurs at N157. D307 is an active-site residue. An intrachain disulfide couples C341 to C374. N-linked (GlcNAc...) asparagine glycosylation is present at N358. Residues 417 to 419 (TKV) carry the Microbody targeting signal motif.

It belongs to the peptidase A1 family.

Its subcellular location is the vacuole. The sequence is that of Vacuolar aspartic protease (APR1) from Candida albicans (Yeast).